A 459-amino-acid chain; its full sequence is Chromosomal replication initiator protein DnaA (459 aa).

The segment at 1-74 (MQKIETFWHF…DEMAQDHFNE (74 aa)) is domain I, interacts with DnaA modulators. Positions 74-122 (ERISFRLELREPAESEAQTVRTSAQKNREDKKPAAEKTQGVTSRKTNPS) are domain II. The tract at residues 87 to 122 (ESEAQTVRTSAQKNREDKKPAAEKTQGVTSRKTNPS) is disordered. Residues 89-98 (EAQTVRTSAQ) are compositionally biased toward polar residues. Residues 99–108 (KNREDKKPAA) are compositionally biased toward basic and acidic residues. Over residues 112–122 (QGVTSRKTNPS) the composition is skewed to polar residues. A domain III, AAA+ region region spans residues 123–339 (QLNASFTFDA…GALKRVLAFS (217 aa)). 4 residues coordinate ATP: G167, G169, K170, and T171. The domain IV, binds dsDNA stretch occupies residues 340–459 (RFTGHSISLD…FNALMHILRG (120 aa)).

This sequence belongs to the DnaA family. As to quaternary structure, oligomerizes as a right-handed, spiral filament on DNA at oriC.

Its subcellular location is the cytoplasm. Functionally, plays an essential role in the initiation and regulation of chromosomal replication. ATP-DnaA binds to the origin of replication (oriC) to initiate formation of the DNA replication initiation complex once per cell cycle. Binds the DnaA box (a 9 base pair repeat at the origin) and separates the double-stranded (ds)DNA. Forms a right-handed helical filament on oriC DNA; dsDNA binds to the exterior of the filament while single-stranded (ss)DNA is stabiized in the filament's interior. The ATP-DnaA-oriC complex binds and stabilizes one strand of the AT-rich DNA unwinding element (DUE), permitting loading of DNA polymerase. After initiation quickly degrades to an ADP-DnaA complex that is not apt for DNA replication. Binds acidic phospholipids. The chain is Chromosomal replication initiator protein DnaA from Nitrosomonas europaea (strain ATCC 19718 / CIP 103999 / KCTC 2705 / NBRC 14298).